The chain runs to 69 residues: Cytochrome c oxidase subunit 8A, mitochondrial (69 aa).

A mitochondrion-targeting transit peptide spans 1-25; that stretch reads MSVLTPLLLRGLTGSARRLPVPRAK. The short motif at 2–19 is the SIFI-degron element; the sequence is SVLTPLLLRGLTGSARRL. Over 26-36 the chain is Mitochondrial matrix; that stretch reads IHSLPPDEKLG. The chain crosses the membrane as a helical span at residues 37 to 60; the sequence is IMELAVGLTSCFVTFLLPAGWILS. Residues 61-69 lie on the Mitochondrial intermembrane side of the membrane; the sequence is HLETYRRPE.

This sequence belongs to the cytochrome c oxidase VIII family. As to quaternary structure, component of the cytochrome c oxidase (complex IV, CIV), a multisubunit enzyme composed of 14 subunits. The complex is composed of a catalytic core of 3 subunits MT-CO1, MT-CO2 and MT-CO3, encoded in the mitochondrial DNA, and 11 supernumerary subunits COX4I, COX5A, COX5B, COX6A, COX6B, COX6C, COX7A, COX7B, COX7C, COX8 and NDUFA4, which are encoded in the nuclear genome. The complex exists as a monomer or a dimer and forms supercomplexes (SCs) in the inner mitochondrial membrane with NADH-ubiquinone oxidoreductase (complex I, CI) and ubiquinol-cytochrome c oxidoreductase (cytochrome b-c1 complex, complex III, CIII), resulting in different assemblies (supercomplex SCI(1)III(2)IV(1) and megacomplex MCI(2)III(2)IV(2)). In terms of processing, in response to mitochondrial stress, the precursor protein is ubiquitinated by the SIFI complex in the cytoplasm before mitochondrial import, leading to its degradation. Within the SIFI complex, UBR4 initiates ubiquitin chain that are further elongated or branched by KCMF1.

It localises to the mitochondrion inner membrane. It participates in energy metabolism; oxidative phosphorylation. Functionally, component of the cytochrome c oxidase, the last enzyme in the mitochondrial electron transport chain which drives oxidative phosphorylation. The respiratory chain contains 3 multisubunit complexes succinate dehydrogenase (complex II, CII), ubiquinol-cytochrome c oxidoreductase (cytochrome b-c1 complex, complex III, CIII) and cytochrome c oxidase (complex IV, CIV), that cooperate to transfer electrons derived from NADH and succinate to molecular oxygen, creating an electrochemical gradient over the inner membrane that drives transmembrane transport and the ATP synthase. Cytochrome c oxidase is the component of the respiratory chain that catalyzes the reduction of oxygen to water. Electrons originating from reduced cytochrome c in the intermembrane space (IMS) are transferred via the dinuclear copper A center (CU(A)) of subunit 2 and heme A of subunit 1 to the active site in subunit 1, a binuclear center (BNC) formed by heme A3 and copper B (CU(B)). The BNC reduces molecular oxygen to 2 water molecules using 4 electrons from cytochrome c in the IMS and 4 protons from the mitochondrial matrix. This Gorilla gorilla gorilla (Western lowland gorilla) protein is Cytochrome c oxidase subunit 8A, mitochondrial (COX8A).